Consider the following 148-residue polypeptide: uncharacterized protein (148 aa).

One can recognise an HTH asnC-type domain in the interval 2–63 (LDELDKRILY…LINPFKAGYE (62 aa)). Residues 21-40 (YSEIARILGVPESTVRVRVK) constitute a DNA-binding region (H-T-H motif).

This is an uncharacterized protein from Pyrococcus furiosus (strain ATCC 43587 / DSM 3638 / JCM 8422 / Vc1).